The sequence spans 791 residues: Probable phosphoketolase (791 aa).

It belongs to the XFP family. It depends on thiamine diphosphate as a cofactor.

The protein is Probable phosphoketolase of Pseudomonas putida (strain ATCC 700007 / DSM 6899 / JCM 31910 / BCRC 17059 / LMG 24140 / F1).